A 241-amino-acid chain; its full sequence is Pyridoxal phosphate phosphatase PHOSPHO2 (241 aa).

The active-site Nucleophile is Asp8. Residues Asp8 and Asp10 each coordinate Mg(2+). Asp10 functions as the Proton donor in the catalytic mechanism. 2 residues coordinate substrate: Asp19 and Asp99. Asp179 lines the Mg(2+) pocket.

Belongs to the HAD-like hydrolase superfamily. PHOSPHO family. The cofactor is Mg(2+).

It catalyses the reaction pyridoxal 5'-phosphate + H2O = pyridoxal + phosphate. In terms of biological role, phosphatase that has high activity toward pyridoxal 5'-phosphate (PLP). Also active at much lower level toward pyrophosphate, phosphoethanolamine (PEA), phosphocholine (PCho), phospho-l-tyrosine, fructose-6-phosphate, p-nitrophenyl phosphate, and h-glycerophosphate. The polypeptide is Pyridoxal phosphate phosphatase PHOSPHO2 (Phospho2) (Rattus norvegicus (Rat)).